The chain runs to 333 residues: 2-oxoglutarate-dependent dioxygenase ucsF (333 aa).

The 123-residue stretch at 174-296 (NASELRLNHY…RYSIAYLCKA (123 aa)) folds into the Fe2OG dioxygenase domain. The Fe cation site is built by histidine 202, aspartate 204, and histidine 264. Residue arginine 287 coordinates 2-oxoglutarate.

Belongs to the iron/ascorbate-dependent oxidoreductase family. It depends on Fe(2+) as a cofactor.

It functions in the pathway mycotoxin biosynthesis. Its function is as follows. 2-oxoglutarate-dependent dioxygenase; part of the gene cluster that mediates the biosynthesis of UCS1025A, a member of the pyrrolizidinone family that acts as a strong telomerase inhibitor and displays potent antibacterial and antitumor properties. These compounds share a hemiaminal-containing pyrrolizidinone core fused with a gamma-lactone, giving a furopyrrolizidine that is connected to a decalin fragment. The polyketide synthase module (PKS) of the PKS-NRPS ucsA is responsible for the synthesis of the polyketide backbone via the condensation of an acetyl-CoA starter unit with 6 malonyl-CoA units. The downstream nonribosomal peptide synthetase (NRPS) module then amidates the carboxyl end of the polyketide with a 2S,3S-methylproline derived from L-isoleucine by the 2-oxoglutarate-dependent dioxygenase ucsF which converts L-isoleucine to (4S,5S)-4-methylpyrroline-5-carboxylate that is further converted to 2S,3S-methylproline by the pyrroline-5-carboxylate reductase ucsG. Reductive release of the completed aminoacyl polyketide from the assembly line can form the 3-pyrrolin-2-one structure via an intramolecular Knoevenagel reaction. Because ucsA lacks a designated enoylreductase (ER) domain, the required activity is provided the enoyl reductase ucsL. This keto acyclic precursor is the substrate of the Diels-Alderase ucsH, that catalyzes the Diels-Alder cycloaddition. Oxidation of the 3S-methyl group to a carboxylate by the cytochrome P450 monooxygenase ucsK allows an oxa-Michael cyclization that might involve the reductase/dehydrogenase ucsI and which furnishes the furopyrrolizidine. The oxidase ucsJ likely plays a critical role in stereoselective reduction of the C5-C6 double bond to afford the required R-configured carboxylate group. Further enolization and oxidation at C5 by an unidentified enzyme affords the last intermediate that can undergo oxa-Michael cyclization to yield UCS1025A. The polypeptide is 2-oxoglutarate-dependent dioxygenase ucsF (Acremonium sp).